Reading from the N-terminus, the 222-residue chain is Pyridoxal phosphate homeostasis protein (222 aa).

Lys35 carries the N6-(pyridoxal phosphate)lysine modification.

The protein belongs to the pyridoxal phosphate-binding protein YggS/PROSC family.

Functionally, pyridoxal 5'-phosphate (PLP)-binding protein, which is involved in PLP homeostasis. The sequence is that of Pyridoxal phosphate homeostasis protein from Helicobacter pylori (strain J99 / ATCC 700824) (Campylobacter pylori J99).